We begin with the raw amino-acid sequence, 57 residues long: UPF0391 membrane protein RPA3029 (57 aa).

The next 2 membrane-spanning stretches (helical) occupy residues 6-26 (WALIFLVVSIIAGIFGFTGIS) and 35-55 (ILFYVFVVIFVVLLILGFTIF).

Belongs to the UPF0391 family.

Its subcellular location is the cell membrane. This is UPF0391 membrane protein RPA3029 from Rhodopseudomonas palustris (strain ATCC BAA-98 / CGA009).